The chain runs to 784 residues: MGSALLLALGLLAQSLGLSWAVPEPKPSTLYPWRRASAPGRVRRAWVIPPISVSENHKRLPYPLVQIKSDKQQLGSVIYSIQGPGVDEEPRNVFSIDKFTGRVYLNATLDREKTDRFRLRAFALDLGGSTLEDPTDLEIVVVDQNDNRPAFLQDVFRGRILEGAIPGTFVTRAEATDADDPETDNAALRFSILEQGSPEFFSIDEHTGEIRTVQVGLDREVVAVYNLTLQVADMSGDGLTATASAIISIDDINDNAPEFTKDEFFMEAAEAVSGVDVGRLEVEDKDLPGSPNWVARFTILEGDPDGQFKIYTDPKTNEGVLSVVKPLDYESREQYELRVSVQNEAPLQAAAPRARRGQTRVSVWVQDTNEAPVFPENPLRTSIAEGAPPGTSVATFSARDPDTEQLQRISYSKDYDPEDWLQVDGATGRIQTQRVLSPASPFLKDGWYRAIILALDNAIPPSTATGTLSIEILEVNDHAPALALPPSGSLCSEPDQGPGLLLGATDEDLPPHGAPFHFQLNPRVPDLGRNWSVSQINVSHARLRLRHQVSEGLHRLSLLLQDSGEPPQQREQTLNVTVCRCGSDGTCLPGAAALRGGGVGVSLGALVIVLASTVVLLVLILLAALRTRFRGHSRGKSLLHGLQEDLRDNILNYDEQGGGEEDQDAYDINQLRHPVEPRATSRSLGRPPLRRDAPFSYVPQPHRVLPTSPSDIANFISDGLEAADSDPSVPPYDTALIYDYEGDGSVAGTLSSILSSLGDEDQDYDYLRDWGPRFARLADMYGHQ.

The first 21 residues, 1-21, serve as a signal peptide directing secretion; the sequence is MGSALLLALGLLAQSLGLSWA. Residues 22–59 constitute a propeptide that is removed on maturation; it reads VPEPKPSTLYPWRRASAPGRVRRAWVIPPISVSENHKR. 5 Cadherin domains span residues 60 to 151, 152 to 259, 260 to 374, 375 to 480, and 481 to 589; these read LPYP…RPAF, LQDV…APEF, TKDE…APVF, PENP…DHAP, and ALAL…TCLP. Residues 60–605 lie on the Extracellular side of the membrane; that stretch reads LPYPLVQIKS…GGGVGVSLGA (546 aa). 2 N-linked (GlcNAc...) asparagine glycosylation sites follow: asparagine 106 and asparagine 226. N-linked (GlcNAc...) asparagine glycosylation is found at asparagine 530, asparagine 537, and asparagine 575. The chain crosses the membrane as a helical span at residues 606–625; that stretch reads LVIVLASTVVLLVLILLAAL. Over 626-784 the chain is Cytoplasmic; the sequence is RTRFRGHSRG…ARLADMYGHQ (159 aa). The segment at 676–700 is disordered; the sequence is EPRATSRSLGRPPLRRDAPFSYVPQ.

As to expression, skeletal muscle.

Its subcellular location is the cell membrane. Its function is as follows. Cadherins are calcium-dependent cell adhesion proteins. They preferentially interact with themselves in a homophilic manner in connecting cells; cadherins may thus contribute to the sorting of heterogeneous cell types. M-cadherin is part of the myogenic program and may provide a trigger for terminal muscle differentiation. The protein is Cadherin-15 (Cdh15) of Mus musculus (Mouse).